Reading from the N-terminus, the 341-residue chain is Anthranilate phosphoribosyltransferase (341 aa).

5-phospho-alpha-D-ribose 1-diphosphate is bound by residues G79, 82-83, T87, 89-92, 107-115, and S119; these read GD, NIST, and KHGNRAVSS. Residue G79 participates in anthranilate binding. S91 contacts Mg(2+). Residue N110 coordinates anthranilate. R165 contributes to the anthranilate binding site. The Mg(2+) site is built by D224 and E225.

This sequence belongs to the anthranilate phosphoribosyltransferase family. As to quaternary structure, homodimer. The cofactor is Mg(2+).

It carries out the reaction N-(5-phospho-beta-D-ribosyl)anthranilate + diphosphate = 5-phospho-alpha-D-ribose 1-diphosphate + anthranilate. It functions in the pathway amino-acid biosynthesis; L-tryptophan biosynthesis; L-tryptophan from chorismate: step 2/5. In terms of biological role, catalyzes the transfer of the phosphoribosyl group of 5-phosphorylribose-1-pyrophosphate (PRPP) to anthranilate to yield N-(5'-phosphoribosyl)-anthranilate (PRA). This chain is Anthranilate phosphoribosyltransferase, found in Bacillus cereus (strain ZK / E33L).